The sequence spans 516 residues: Histone H4 transcription factor (516 aa).

3 consecutive C2H2-type zinc fingers follow at residues 15–39 (LQCE…VTQH), 127–151 (FLCL…VEAH), and 167–191 (VLCG…LRSH). The segment at 197 to 219 (VACPTCGGMFANNTKFLDHIRRQ) adopts a C2H2-type 4; degenerate zinc-finger fold. C2H2-type zinc fingers lie at residues 227-249 (FQCS…MRNH), 253-276 (YKCP…RFRH), 282-304 (FKCD…LDTH), 310-335 (YSCD…RKVH), and 343-366 (YRCH…RKKH). Positions 371–516 (PSGHPRFRYK…AAEEPEVQMV (146 aa)) are interaction with NPAT. A required for activation of histone H4 transcription and contributes to DNA-binding region spans residues 372-405 (SGHPRFRYKEHEDGYMRLQLVRYESVELTQQLLR). Disordered stretches follow at residues 429–456 (TVPG…PASQ) and 486–516 (PGEP…VQMV). Positions 436–445 (PQEEAEEEGG) are enriched in acidic residues.

Binds MBD2 and a histone deacetylase complex. Interacts with NPAT. In terms of processing, ubiquitinated. Ubiquitination may lead to proteasome-mediated degradation.

It is found in the nucleus. Transcriptional repressor that binds to the consensus sequence 5'-CGGACGTT-3' and to the RB1 promoter. Transcriptional activator that promotes histone H4 gene transcription at the G1/S phase transition in conjunction with NPAT. Also activates transcription of the ATM and PRKDC genes. Autoregulates its expression by associating with its own promoter. This Bos taurus (Bovine) protein is Histone H4 transcription factor (HINFP).